A 417-amino-acid chain; its full sequence is Mitochondrial tRNA-specific 2-thiouridylase 1 (417 aa).

Residues 10 to 17 (ALSGGVDS) and Met-36 contribute to the ATP site. The interaction with target base in tRNA stretch occupies residues 96–98 (NPD). The active-site Nucleophile is the Cys-101. Cys-101 and Cys-222 are oxidised to a cystine. ATP is bound at residue Gly-126. The interval 171–173 (KDQ) is interaction with tRNA. Cys-222 serves as the catalytic Cysteine persulfide intermediate. The interaction with tRNA stretch occupies residues 334–335 (RH). Residues 397–417 (KNRTRVAPEASSDSPGLHPTS) form a disordered region. A compositionally biased stretch (polar residues) spans 407–417 (SSDSPGLHPTS).

Belongs to the MnmA/TRMU family. Widely expressed but most abundant in tissues with high metabolic rate including heart, liver and brain. Expression is low in spleen, testis, lung and skeletal muscle. Also expressed in inner ear.

The protein localises to the mitochondrion. It carries out the reaction 5-taurinomethyluridine(34) in tRNA + S-sulfanyl-L-cysteinyl-[protein] + AH2 + ATP = 5-taurinomethyl-2-thiouridine(34) in tRNA + L-cysteinyl-[protein] + A + AMP + diphosphate + H(+). Its function is as follows. Catalyzes the 2-thiolation of uridine at the wobble position (U34) of mitochondrial tRNA(Lys), tRNA(Glu) and tRNA(Gln). Required for the formation of 5-taurinomethyl-2-thiouridine (tm5s2U) of mitochondrial tRNA(Lys), tRNA(Glu), and tRNA(Gln) at the wobble position. ATP is required to activate the C2 atom of the wobble base. The polypeptide is Mitochondrial tRNA-specific 2-thiouridylase 1 (Trmu) (Mus musculus (Mouse)).